The chain runs to 583 residues: Ribonuclease ZC3H12A (583 aa).

Basic and acidic residues predominate over residues Met1 to Ser11. Disordered stretches follow at residues Met1–Thr29 and Gly73–Leu119. Over residues Thr15–Thr29 the composition is skewed to low complexity. Residues Glu26–Lys71 are ubiquitin association domain. A necessary for interaction with TANK region spans residues Val65 to Gly134. The segment covering Gly73 to Ala82 has biased composition (basic and acidic residues). Position 83 is a phosphoserine (Ser83). The RNase stretch occupies residues Gly96–Leu281. An RNase NYN domain is found at Leu119–Asn274. An RNA binding region spans residues Arg198–Arg204. Residue Asp210 coordinates Mg(2+). Disordered stretches follow at residues Asp262–Cys290 and Ala323–Trp404. Residues Glu284 to Arg309 form a C3H1-type zinc finger. Positions His285–Gly441 are necessary for interaction with ZC3H12D. Low complexity predominate over residues Arg341–Pro352. A compositionally biased stretch (basic and acidic residues) spans Thr353–Lys364. Residues Pro384–Gly393 show a composition bias toward low complexity. Ser422 and Ser426 each carry phosphoserine. Residues Tyr503–Ala530 are disordered.

The protein belongs to the ZC3H12 family. In terms of assembly, oligomer. Found in a deubiquitination complex with TANK, USP10 and ZC3H12A; this complex inhibits genotoxic stress- or interleukin-1-beta-mediated NF-kappaB activation by promoting IKBKG or TRAF6 deubiquitination. Interacts with IKBKG; this interaction increases in response to DNA damage. Interacts with TANK; this interaction increases in response to DNA damage and serves as a bridge to anchor both TANK and USP10 into a deubiquitinating complex. Interacts with TRAF6; this interaction increases in response to DNA damage and is stimulated by TANK. Interacts with USP10; this interaction increases in response to DNA damage and serves as a bridge to anchor both TANK and USP10 into a deubiquitinating complex. Interacts with ZC3H12D. Interacts with TNRC6A. Interacts with IKBKB/IKKB. Interacts with IKBKB/IKKB. Interacts with BTRC; the interaction occurs when ZC3H12A is phosphorylated in a IKBKB/IKKB-dependent manner. Interacts with IRAK1; this interaction increases the interaction between ZC3H12A and IKBKB/IKKB. Interacts with UPF1; this interaction occurs in a mRNA translationally active- and termination-dependent manner and is essential for ZC3H12A-mediated degradation of target mRNAs. Associates with ribosomes. Interacts with ubiquitin. Mg(2+) is required as a cofactor. Phosphorylated by IRAK1; phosphorylation is necessary for subsequent phosphorylation by the I-kappa-B-kinase (IKK) complex. Phosphorylated by I-kappa-B-kinase (IKK) subunits IKBKB/IKKB and CHUK/IKKA at Ser-422 and Ser-426; these phosphorylations promote ubiquitin proteasome-mediated degradation of ZC3H12A and hence facilitates rapid and robust production of IL-6 mRNA in response to toll-like receptor (TLR) or IL-1 receptor stimuli. In terms of processing, ubiquitinated; ubiquitination is induced in response to interleukin IL1 receptor stimuli in a IKBKB/IKKB and IRAK1-dependent manner, leading to proteasome-mediated degradation. Post-translationally, proteolytically cleaved between Arg-95 and Arg-198 by MALT1 in activated T-cells; cleavage at Arg-95 is critical for promoting ZC3H12A degradation in response to T-cell receptor (TCR) stimulation, and hence is necessary for prolonging the stability of a set of mRNAs controlling T-cell activation and Th17 cell differentiation.

It is found in the nucleus. The protein resides in the cytoplasm. Its subcellular location is the P-body. It localises to the rough endoplasmic reticulum membrane. The protein localises to the cytoplasmic granule. In terms of biological role, endoribonuclease involved in various biological functions such as cellular inflammatory response and immune homeostasis, glial differentiation of neuroprogenitor cells, cell death of cardiomyocytes, adipogenesis and angiogenesis. Functions as an endoribonuclease involved in mRNA decay. Modulates the inflammatory response by promoting the degradation of a set of translationally active cytokine-induced inflammation-related mRNAs, such as IL6 and IL12B, during the early phase of inflammation. Prevents aberrant T-cell-mediated immune reaction by degradation of multiple mRNAs controlling T-cell activation, such as those encoding cytokines (IL6 and IL2), cell surface receptors (ICOS, TNFRSF4 and TNFR2) and transcription factor (REL). Inhibits cooperatively with ZC3H12A the differentiation of helper T cells Th17 in lungs. They repress target mRNA encoding the Th17 cell-promoting factors IL6, ICOS, REL, IRF4, NFKBID and NFKBIZ. The cooperation requires RNA-binding by RC3H1 and the nuclease activity of ZC3H12A. Together with RC3H1, destabilizes TNFRSF4/OX40 mRNA by binding to the conserved stem loop structure in its 3'UTR. Self regulates by destabilizing its own mRNA. Cleaves mRNA harboring a stem-loop (SL), often located in their 3'-UTRs, during the early phase of inflammation in a helicase UPF1-dependent manner. Plays a role in the inhibition of microRNAs (miRNAs) biogenesis. Cleaves the terminal loop of a set of precursor miRNAs (pre-miRNAs) important for the regulation of the inflammatory response leading to their degradation, and thus preventing the biosynthesis of mature miRNAs. Also plays a role in promoting angiogenesis in response to inflammatory cytokines by inhibiting the production of antiangiogenic microRNAs via its anti-dicer RNase activity. Affects the overall ubiquitination of cellular proteins. Positively regulates deubiquitinase activity promoting the cleavage at 'Lys-48'- and 'Lys-63'-linked polyubiquitin chains on TNF receptor-associated factors (TRAFs), preventing JNK and NF-kappa-B signaling pathway activation, and hence negatively regulating macrophage-mediated inflammatory response and immune homeostasis. Also induces deubiquitination of the transcription factor HIF1A, probably leading to its stabilization and nuclear import, thereby positively regulating the expression of proangiogenic HIF1A-targeted genes. Involved in a TANK-dependent negative feedback response to attenuate NF-kappaB activation through the deubiquitination of IKBKG or TRAF6 in response to interleukin-1-beta (IL1B) stimulation or upon DNA damage. Prevents stress granules (SGs) formation and promotes macrophage apoptosis under stress conditions, including arsenite-induced oxidative stress, heat shock, and energy deprivation. Plays a role in the regulation of macrophage polarization; promotes IL4-induced polarization of macrophages M1 into anti-inflammatory M2 state. May also act as a transcription factor that regulates the expression of multiple genes involved in inflammatory response, angiogenesis, adipogenesis and apoptosis. Functions as a positive regulator of glial differentiation of neuroprogenitor cells through an amyloid precursor protein (APP)-dependent signaling pathway. Attenuates septic myocardial contractile dysfunction in response to lipopolysaccharide (LPS) by reducing I-kappa-B-kinase (IKK)-mediated NF-kappa-B activation, and hence myocardial pro-inflammatory cytokine production. The sequence is that of Ribonuclease ZC3H12A from Bos taurus (Bovine).